The primary structure comprises 31 residues: Cytochrome b6-f complex subunit 6 (31 aa).

The helical transmembrane segment at 4–24 threads the bilayer; sequence LLSYFAFLMLALTFTLALFVG.

Belongs to the PetL family. The 4 large subunits of the cytochrome b6-f complex are cytochrome b6, subunit IV (17 kDa polypeptide, PetD), cytochrome f and the Rieske protein, while the 4 small subunits are PetG, PetL, PetM and PetN. The complex functions as a dimer.

It localises to the plastid. The protein resides in the chloroplast thylakoid membrane. Component of the cytochrome b6-f complex, which mediates electron transfer between photosystem II (PSII) and photosystem I (PSI), cyclic electron flow around PSI, and state transitions. PetL is important for photoautotrophic growth as well as for electron transfer efficiency and stability of the cytochrome b6-f complex. This Adiantum capillus-veneris (Maidenhair fern) protein is Cytochrome b6-f complex subunit 6.